The chain runs to 160 residues: ATP synthase subunit b (160 aa).

A helical membrane pass occupies residues 12-32; that stretch reads ISFVLFVWFCMKYVWYPFISI.

This sequence belongs to the ATPase B chain family. In terms of assembly, F-type ATPases have 2 components, F(1) - the catalytic core - and F(0) - the membrane proton channel. F(1) has five subunits: alpha(3), beta(3), gamma(1), delta(1), epsilon(1). F(0) has three main subunits: a(1), b(2) and c(10-14). The alpha and beta chains form an alternating ring which encloses part of the gamma chain. F(1) is attached to F(0) by a central stalk formed by the gamma and epsilon chains, while a peripheral stalk is formed by the delta and b chains.

It is found in the cell inner membrane. Its function is as follows. F(1)F(0) ATP synthase produces ATP from ADP in the presence of a proton or sodium gradient. F-type ATPases consist of two structural domains, F(1) containing the extramembraneous catalytic core and F(0) containing the membrane proton channel, linked together by a central stalk and a peripheral stalk. During catalysis, ATP synthesis in the catalytic domain of F(1) is coupled via a rotary mechanism of the central stalk subunits to proton translocation. Functionally, component of the F(0) channel, it forms part of the peripheral stalk, linking F(1) to F(0). This chain is ATP synthase subunit b, found in Blochmanniella pennsylvanica (strain BPEN).